A 691-amino-acid polypeptide reads, in one-letter code: Cyclic nucleotide-gated channel alpha-1 (691 aa).

The Cytoplasmic segment spans residues 1–168 (MKKNIINTWY…PAGNMYYNWL (168 aa)). A disordered region spans residues 31–151 (ENGARSSFSD…KGKDKKEEEK (121 aa)). The span at 39 to 56 (SDDDGDDDSASMFEESEN) shows a compositional bias: acidic residues. Basic and acidic residues-rich tracts occupy residues 57-76 (ETPH…DPSQ) and 112-151 (SKSG…EEEK). A helical transmembrane segment spans residues 169-190 (FCITLPVMYNWTMVIARACFDE). Over 191–200 (LQSDYLEYWI) the chain is Extracellular. A helical membrane pass occupies residues 201-221 (IFDYLSDIVYLLDMFVRTRTG). At 222-246 (YLEQGLLVREEAKLIEKYKSNLQFK) the chain is on the cytoplasmic side. Residues 247–265 (LDFLSVIPTDLLYFKLGWN) form a helical membrane-spanning segment. Residues 266–270 (YPEIR) are Extracellular-facing. Residues 271-289 (LNRLLRISRMFEFFQRTET) form a helical membrane-spanning segment. At 290 to 296 (RTNYPNI) the chain is on the cytoplasmic side. Residues 294 to 402 (PNIFRISNLV…GNIGSMISNM (109 aa)) are ion conduction pathway. Residues 297–320 (FRISNLVMYIVIIIHWNACVYFSI) form a helical membrane-spanning segment. The Extracellular segment spans residues 321-343 (SKAIGFGNDTWVYPDVNDPEFGR). A glycan (N-linked (GlcNAc...) asparagine) is linked at Asn-328. A run of 2 helical transmembrane segments spans residues 344–378 (LARK…VFVV) and 379–403 (VDFL…SNMN). Positions 361–364 (TIGE) are selectivity filter. Positions 404–480 (AARAEFQARI…DTLKKVRIFA (77 aa)) are C-linker. Over 404 to 691 (AARAEFQARI…ESRPLDSTQD (288 aa)) the chain is Cytoplasmic. The cyclic nucleotide-binding domain stretch occupies residues 484-604 (AGLLVELVLK…EEKGKQILMK (121 aa)). 3',5'-cyclic GMP-binding residues include Gly-544, Ser-547, Arg-560, and Thr-561. Residues Arg-560 and Thr-561 each coordinate 3',5'-cyclic AMP. A coiled-coil region spans residues 622 to 676 (LEEKVTRMEGSVDLLQTRFARILAEYESMQQKLKQRLTKVERFLKPIIDTEFSAL).

This sequence belongs to the cyclic nucleotide-gated cation channel (TC 1.A.1.5) family. CNGA1 subfamily. Forms heterotetrameric channels composed of CNGA1 and CNGB1 subunits with 3:1 stoichiometry. May also form cyclic nucleotide-activated homotetrameric channels, that are efficiently activated by saturating cGMP, but poorly activated by saturating cAMP compared to the heterotetramer with CNGB1. The channel binds Ca(2+)-bound CALM1 via CaM1 and CaM2 regions of the CNGB1 subunit; this interaction modulates the affinity of the channel for cNMPs in response to intracellular Ca(2+) levels.

It is found in the cell membrane. The enzyme catalyses Ca(2+)(in) = Ca(2+)(out). It catalyses the reaction Na(+)(in) = Na(+)(out). The catalysed reaction is K(+)(in) = K(+)(out). It carries out the reaction NH4(+)(in) = NH4(+)(out). The enzyme catalyses Rb(+)(in) = Rb(+)(out). It catalyses the reaction Li(+)(in) = Li(+)(out). The catalysed reaction is Cs(+)(in) = Cs(+)(out). Its function is as follows. Pore-forming subunit of the rod cyclic nucleotide-gated channel. Mediates rod photoresponses at dim light converting transient changes in intracellular cGMP levels into electrical signals. In the dark, cGMP levels are high and keep the channel open enabling a steady inward current carried by Na(+) and Ca(2+) ions that leads to membrane depolarization and neurotransmitter release from synaptic terminals. Upon photon absorption cGMP levels decline leading to channel closure and membrane hyperpolarization that ultimately slows neurotransmitter release and signals the presence of light, the end point of the phototransduction cascade. Conducts cGMP- and cAMP-gated ion currents, with permeability for monovalent and divalent cations. The selectivity for Ca(2+) over Na(+) increases with cGMP concentrations, whereas the selectivity among monovalent ions is independent of the cGMP levels. The sequence is that of Cyclic nucleotide-gated channel alpha-1 from Canis lupus familiaris (Dog).